The following is a 346-amino-acid chain: Dynein regulatory complex protein 9 (346 aa).

Positions 299–308 are enriched in basic and acidic residues; it reads MEKEQREKNA. A disordered region spans residues 299-346; the sequence is MEKEQREKNAATKIQAWWRGTLVRKGPRSKKADKSKKKDGKKGKKKRK. The IQ domain maps to 305–334; the sequence is EKNAATKIQAWWRGTLVRKGPRSKKADKSK. Basic residues predominate over residues 323 to 346; sequence KGPRSKKADKSKKKDGKKGKKKRK.

This sequence belongs to the DRC9 family. As to quaternary structure, component of the nexin-dynein regulatory complex (N-DRC). Interacts (via IQ domain) with calmodulin when calcium levels are low. Does not interact with calmodulin in the presence of Ca(2+). Interacts with hsp70 and may form a complex with camk4 and hsp70. In terms of tissue distribution, detected in adult testis, and at lower levels in brain, kidney and ovary.

It localises to the cytoplasm. The protein resides in the cell projection. Its subcellular location is the cilium. It is found in the flagellum. The protein localises to the cytoskeleton. It localises to the flagellum axoneme. Functionally, component of the nexin-dynein regulatory complex (N-DRC), a key regulator of ciliary/flagellar motility which maintains the alignment and integrity of the distal axoneme and regulates microtubule sliding in motile axonemes. Binds calmodulin when cellular Ca(2+) levels are low and thereby contributes to the regulation of calcium and calmodulin-dependent protein kinase IV (camk4) activity; contributes to the regulation of camk4 signaling cascades. Plays a role in the regulation of definitive hematopoiesis via its effects on camk4. The protein is Dynein regulatory complex protein 9 of Danio rerio (Zebrafish).